The chain runs to 483 residues: Bromoperoxidase-catalase (483 aa).

Residues 1 to 24 (MTQGPLTTEAGAPVADNQNSETAG) form a disordered region. Active-site residues include H54 and N127. Y337 is a heme binding site.

This sequence belongs to the catalase family.

It catalyses the reaction 2 H2O2 = O2 + 2 H2O. In Streptomyces venezuelae (strain ATCC 10712 / CBS 650.69 / DSM 40230 / JCM 4526 / NBRC 13096 / PD 04745), this protein is Bromoperoxidase-catalase (bca).